A 500-amino-acid polypeptide reads, in one-letter code: MSIVDVRTPDPKRFIPGATGDWEVIIGMEVHAQVLSNSKLFSSASTEFGSEPNANVSLVDAAMPGMLPVINEECVKQAVRTGLGLKAKINNRSIFDRKNYFYPDLPQGYQISQYKDPIVGEGKIIISVGPDRQGQFEDVEIGIERLHLEQDAGKSMHDQHPAMSYVDLNRSGVALMEIVSKPDLRSSDEAKAYLTKLRSILRYLGTCDGNMDEGSMRADVNVSVRRPGEAFGTRCEIKNVNSIRFVGQSIEYEARRQIAILEDGGAIDQETRLFDANKGETRSMRSKEEAHDYRYFPDPDLLPLEFDDAFVEALKADLPELPDDKKERFVRDLGLSVYDASVLVSEKAIADYFEAVAEGRDGKAAANWVINDLLGALNKAGKTIEETPVSPAQLGGIIDLIKDGTISGKLAKDVFEILWNEGGDPAEIVESRGMKQVTDTGAIEKAVDEIIAANPDQVEKAKAKPSLAGWFVGQVMKATGGKANPQAVQALVKSKLGIEE.

It belongs to the GatB/GatE family. GatB subfamily. Heterotrimer of A, B and C subunits.

The enzyme catalyses L-glutamyl-tRNA(Gln) + L-glutamine + ATP + H2O = L-glutaminyl-tRNA(Gln) + L-glutamate + ADP + phosphate + H(+). It carries out the reaction L-aspartyl-tRNA(Asn) + L-glutamine + ATP + H2O = L-asparaginyl-tRNA(Asn) + L-glutamate + ADP + phosphate + 2 H(+). Functionally, allows the formation of correctly charged Asn-tRNA(Asn) or Gln-tRNA(Gln) through the transamidation of misacylated Asp-tRNA(Asn) or Glu-tRNA(Gln) in organisms which lack either or both of asparaginyl-tRNA or glutaminyl-tRNA synthetases. The reaction takes place in the presence of glutamine and ATP through an activated phospho-Asp-tRNA(Asn) or phospho-Glu-tRNA(Gln). The chain is Aspartyl/glutamyl-tRNA(Asn/Gln) amidotransferase subunit B from Rhizobium meliloti (strain 1021) (Ensifer meliloti).